We begin with the raw amino-acid sequence, 156 residues long: Ribosome maturation factor RimP (156 aa).

Belongs to the RimP family.

The protein resides in the cytoplasm. Required for maturation of 30S ribosomal subunits. The chain is Ribosome maturation factor RimP from Bacillus cereus (strain G9842).